A 412-amino-acid polypeptide reads, in one-letter code: Phosphoglycerate kinase 1 (412 aa).

Residues 28 to 30 (DFN), 65 to 68 (HQGR), arginine 122, and arginine 162 each bind substrate. ATP contacts are provided by residues glutamate 336 and 361-364 (GGHT).

The protein belongs to the phosphoglycerate kinase family. In terms of assembly, monomer.

Its subcellular location is the cytoplasm. The catalysed reaction is (2R)-3-phosphoglycerate + ATP = (2R)-3-phospho-glyceroyl phosphate + ADP. It participates in carbohydrate degradation; glycolysis; pyruvate from D-glyceraldehyde 3-phosphate: step 2/5. This Methanosarcina acetivorans (strain ATCC 35395 / DSM 2834 / JCM 12185 / C2A) protein is Phosphoglycerate kinase 1.